Here is a 243-residue protein sequence, read N- to C-terminus: 1-(5-phosphoribosyl)-5-[(5-phosphoribosylamino)methylideneamino] imidazole-4-carboxamide isomerase (243 aa).

The active-site Proton acceptor is the Asp8. Asp129 functions as the Proton donor in the catalytic mechanism.

It belongs to the HisA/HisF family.

The protein resides in the cytoplasm. The enzyme catalyses 1-(5-phospho-beta-D-ribosyl)-5-[(5-phospho-beta-D-ribosylamino)methylideneamino]imidazole-4-carboxamide = 5-[(5-phospho-1-deoxy-D-ribulos-1-ylimino)methylamino]-1-(5-phospho-beta-D-ribosyl)imidazole-4-carboxamide. The protein operates within amino-acid biosynthesis; L-histidine biosynthesis; L-histidine from 5-phospho-alpha-D-ribose 1-diphosphate: step 4/9. This Parvibaculum lavamentivorans (strain DS-1 / DSM 13023 / NCIMB 13966) protein is 1-(5-phosphoribosyl)-5-[(5-phosphoribosylamino)methylideneamino] imidazole-4-carboxamide isomerase.